Reading from the N-terminus, the 342-residue chain is Dihydroorotate dehydrogenase (quinone) (342 aa).

FMN-binding positions include 65–69 (AGLDK) and T89. K69 provides a ligand contact to substrate. Substrate is bound at residue 114 to 118 (NRMGF). FMN contacts are provided by N142 and N175. N175 is a substrate binding site. S178 acts as the Nucleophile in catalysis. Substrate is bound at residue N180. Positions 220 and 248 each coordinate FMN. Substrate is bound at residue 249–250 (NT). Residues G271, G300, and 321 to 322 (YT) each bind FMN.

Belongs to the dihydroorotate dehydrogenase family. Type 2 subfamily. As to quaternary structure, monomer. Requires FMN as cofactor.

The protein localises to the cell membrane. The enzyme catalyses (S)-dihydroorotate + a quinone = orotate + a quinol. It participates in pyrimidine metabolism; UMP biosynthesis via de novo pathway; orotate from (S)-dihydroorotate (quinone route): step 1/1. In terms of biological role, catalyzes the conversion of dihydroorotate to orotate with quinone as electron acceptor. The chain is Dihydroorotate dehydrogenase (quinone) from Burkholderia pseudomallei (strain K96243).